The following is a 312-amino-acid chain: Acetyl-coenzyme A carboxylase carboxyl transferase subunit alpha (312 aa).

The region spanning 36-286 is the CoA carboxyltransferase C-terminal domain; that stretch reads RLDKEVKSIY…KEYFLDALRT (251 aa).

It belongs to the AccA family. As to quaternary structure, acetyl-CoA carboxylase is a heterohexamer composed of biotin carboxyl carrier protein (AccB), biotin carboxylase (AccC) and two subunits each of ACCase subunit alpha (AccA) and ACCase subunit beta (AccD).

It localises to the cytoplasm. It catalyses the reaction N(6)-carboxybiotinyl-L-lysyl-[protein] + acetyl-CoA = N(6)-biotinyl-L-lysyl-[protein] + malonyl-CoA. Its pathway is lipid metabolism; malonyl-CoA biosynthesis; malonyl-CoA from acetyl-CoA: step 1/1. Functionally, component of the acetyl coenzyme A carboxylase (ACC) complex. First, biotin carboxylase catalyzes the carboxylation of biotin on its carrier protein (BCCP) and then the CO(2) group is transferred by the carboxyltransferase to acetyl-CoA to form malonyl-CoA. This is Acetyl-coenzyme A carboxylase carboxyl transferase subunit alpha from Helicobacter pylori (strain Shi470).